A 95-amino-acid chain; its full sequence is MPGARVAAHLDALGPLVSYVQPPLLPSMFYVGLFFVNVLILYYAFLMEYIVLNVGLVFLPEDLDQALVDLGVLSDPGSGLYDADSELDVFDGYLE.

Belongs to the DEXI family.

In Mus musculus (Mouse), this protein is Dexamethasone-induced protein (Dexi).